Here is a 61-residue protein sequence, read N- to C-terminus: Small ribosomal subunit protein uS14B (61 aa).

Zn(2+) contacts are provided by cysteine 24, cysteine 27, cysteine 40, and cysteine 43.

It belongs to the universal ribosomal protein uS14 family. Zinc-binding uS14 subfamily. As to quaternary structure, part of the 30S ribosomal subunit. Contacts proteins S3 and S10. Zn(2+) serves as cofactor.

Binds 16S rRNA, required for the assembly of 30S particles and may also be responsible for determining the conformation of the 16S rRNA at the A site. This Bacillus velezensis (strain DSM 23117 / BGSC 10A6 / LMG 26770 / FZB42) (Bacillus amyloliquefaciens subsp. plantarum) protein is Small ribosomal subunit protein uS14B.